The sequence spans 338 residues: Biotin synthase (338 aa).

The Radical SAM core domain occupies 45 to 272; the sequence is DEVQMSTLLS…QSVVRLSAGR (228 aa). C60, C64, and C67 together coordinate [4Fe-4S] cluster. 4 residues coordinate [2Fe-2S] cluster: C104, C135, C195, and R267.

It belongs to the radical SAM superfamily. Biotin synthase family. In terms of assembly, homodimer. [4Fe-4S] cluster serves as cofactor. [2Fe-2S] cluster is required as a cofactor.

It carries out the reaction (4R,5S)-dethiobiotin + (sulfur carrier)-SH + 2 reduced [2Fe-2S]-[ferredoxin] + 2 S-adenosyl-L-methionine = (sulfur carrier)-H + biotin + 2 5'-deoxyadenosine + 2 L-methionine + 2 oxidized [2Fe-2S]-[ferredoxin]. The protein operates within cofactor biosynthesis; biotin biosynthesis; biotin from 7,8-diaminononanoate: step 2/2. Its function is as follows. Catalyzes the conversion of dethiobiotin (DTB) to biotin by the insertion of a sulfur atom into dethiobiotin via a radical-based mechanism. This chain is Biotin synthase, found in Parvibaculum lavamentivorans (strain DS-1 / DSM 13023 / NCIMB 13966).